A 65-amino-acid polypeptide reads, in one-letter code: uncharacterized protein (65 aa).

The disordered stretch occupies residues 1 to 22 (MEKETPQQETKQSTNKESGFFD). Residues 7–17 (QQETKQSTNKE) show a composition bias toward polar residues. The stretch at 22–65 (DEIIKRTNQLLEKEKELHEKYNKEITSQQDQIDQLKKKINQLKY) forms a coiled coil.

This is an uncharacterized protein from Dictyostelium discoideum (Social amoeba).